A 159-amino-acid chain; its full sequence is Phosphopantetheine adenylyltransferase (159 aa).

Threonine 10 provides a ligand contact to substrate. ATP is bound by residues 10–11 (TF) and histidine 18. Positions 42, 74, and 88 each coordinate substrate. Residues 89-91 (GLR), glutamate 99, and 124-130 (WSFISSS) contribute to the ATP site.

Belongs to the bacterial CoaD family. Homohexamer. Mg(2+) serves as cofactor.

The protein resides in the cytoplasm. It carries out the reaction (R)-4'-phosphopantetheine + ATP + H(+) = 3'-dephospho-CoA + diphosphate. It participates in cofactor biosynthesis; coenzyme A biosynthesis; CoA from (R)-pantothenate: step 4/5. Reversibly transfers an adenylyl group from ATP to 4'-phosphopantetheine, yielding dephospho-CoA (dPCoA) and pyrophosphate. This chain is Phosphopantetheine adenylyltransferase, found in Citrobacter koseri (strain ATCC BAA-895 / CDC 4225-83 / SGSC4696).